We begin with the raw amino-acid sequence, 259 residues long: Protein CWC15 homolog (259 aa).

The tract at residues 1-182 (MTTAARPTFD…EKKQEDERIR (182 aa)) is disordered. Residues 52-71 (DENRNRDFRKELEEREREAR) show a composition bias toward basic and acidic residues. 2 stretches are compositionally biased toward low complexity: residues 72–82 (SGTGATSSSSG) and 114–126 (QQQA…QQAA). The span at 129 to 150 (DADEPLDNDSSDSDSDSDDDDA) shows a compositional bias: acidic residues. Positions 150–182 (AALLAELQKIKQERLQETARRESEKKQEDERIR) form a coiled coil. Basic and acidic residues predominate over residues 157 to 182 (QKIKQERLQETARRESEKKQEDERIR).

This sequence belongs to the CWC15 family.

Functionally, involved in pre-mRNA splicing. In Drosophila melanogaster (Fruit fly), this protein is Protein CWC15 homolog (c12.1).